Here is a 143-residue protein sequence, read N- to C-terminus: Nucleoside diphosphate kinase (143 aa).

ATP contacts are provided by K11, F59, R87, T93, R104, and N114. H117 functions as the Pros-phosphohistidine intermediate in the catalytic mechanism.

The protein belongs to the NDK family. In terms of assembly, homotetramer. The cofactor is Mg(2+).

The protein localises to the cytoplasm. The catalysed reaction is a 2'-deoxyribonucleoside 5'-diphosphate + ATP = a 2'-deoxyribonucleoside 5'-triphosphate + ADP. It carries out the reaction a ribonucleoside 5'-diphosphate + ATP = a ribonucleoside 5'-triphosphate + ADP. Its function is as follows. Major role in the synthesis of nucleoside triphosphates other than ATP. The ATP gamma phosphate is transferred to the NDP beta phosphate via a ping-pong mechanism, using a phosphorylated active-site intermediate. The polypeptide is Nucleoside diphosphate kinase (Escherichia coli O81 (strain ED1a)).